The sequence spans 566 residues: MKTVIALSYILCLTFGQDLPGNDNSTATLCLGHHAVPNGTIVKTITDDQIEVTNATELVQSSSTGKICNNPHRILDGRACTLIDALLGDPHCDVFQNETWDLFVERSNAFSNCYPYDIPDYASLRSLVASSGTLEFITEGFTWTGVTQNGGSSACKRGPANGFFSRLNWLTKSESAYPVLNVTMPNNDNFDKLYIWGVHHPSTNQEQTNLYVQASGRVTVSTRRSQQTIIPNIGSRPWVRGQPGRISIYWTIVKPGDVLVINSNGNLIAPRGYFKMRTGKSSIMRSDAPIDTCISECITPNGSIPNDKPFQNVNKITYGACPKYVKQNTLKLATGMRNVPEKQTRGLFGAIAGFIENGWEGMIDGWYGFRHQNSEGTGQAADLKSTQAAIDQINRKLNRVIEKTNEKFHQIEKEFSEVEGRIQDLEKYVEDTKIDLWSYNAELLVALENQHTIDLADSEMNKLFEKTRRQLRENAEDMGNGCFKIYHKCDNACIESIRNGTYDHDIYRDEALNNRFQIKGVELKSGYKDWILWISFAISCLLLCVVLLGFIMWACQRGNIRCNICI.

The first 16 residues, 1-16 (MKTVIALSYILCLTFG), serve as a signal peptide directing secretion. Topologically, residues 17 to 530 (QDLPGNDNST…VELKSGYKDW (514 aa)) are extracellular. Residues Asn-24, Asn-38, and Asn-54 are each glycosylated (N-linked (GlcNAc...) asparagine; by host). 6 disulfides stabilise this stretch: Cys-30–Cys-482, Cys-68–Cys-293, Cys-80–Cys-92, Cys-113–Cys-155, Cys-297–Cys-321, and Cys-489–Cys-493. Asn-97 is a glycosylation site (N-linked (GlcNAc...) asparagine; by host). Residues Asn-181 and Asn-301 are each glycosylated (N-linked (GlcNAc...) asparagine; by host). N-linked (GlcNAc...) asparagine; by host glycosylation is present at Asn-499. A helical membrane pass occupies residues 531-551 (ILWISFAISCLLLCVVLLGFI). Residues 552 to 566 (MWACQRGNIRCNICI) lie on the Cytoplasmic side of the membrane. 3 S-palmitoyl cysteine; by host lipidation sites follow: Cys-555, Cys-562, and Cys-565.

It belongs to the influenza viruses hemagglutinin family. As to quaternary structure, homotrimer of disulfide-linked HA1-HA2. Palmitoylated. Post-translationally, in natural infection, inactive HA is matured into HA1 and HA2 outside the cell by one or more trypsin-like, arginine-specific endoprotease secreted by the bronchial epithelial cells. One identified protease that may be involved in this process is secreted in lungs by club cells.

Its subcellular location is the virion membrane. The protein localises to the host apical cell membrane. Functionally, binds to sialic acid-containing receptors on the cell surface, bringing about the attachment of the virus particle to the cell. This attachment induces virion internalization of about two third of the virus particles through clathrin-dependent endocytosis and about one third through a clathrin- and caveolin-independent pathway. Plays a major role in the determination of host range restriction and virulence. Class I viral fusion protein. Responsible for penetration of the virus into the cell cytoplasm by mediating the fusion of the membrane of the endocytosed virus particle with the endosomal membrane. Low pH in endosomes induces an irreversible conformational change in HA2, releasing the fusion hydrophobic peptide. Several trimers are required to form a competent fusion pore. Binds to sialic acid-containing receptors on the cell surface, bringing about the attachment of the virus particle to the cell. This attachment induces virion internalization either through clathrin-dependent endocytosis or through clathrin- and caveolin-independent pathway. Plays a major role in the determination of host range restriction and virulence. Class I viral fusion protein. Responsible for penetration of the virus into the cell cytoplasm by mediating the fusion of the membrane of the endocytosed virus particle with the endosomal membrane. Low pH in endosomes induces an irreversible conformational change in HA2, releasing the fusion hydrophobic peptide. Several trimers are required to form a competent fusion pore. The protein is Hemagglutinin of Influenza A virus (strain A/Duck/Ukraine/1/1963 H3N8).